Consider the following 221-residue polypeptide: Riboflavin kinase (221 aa).

Residues Met1–Ser92 form an H-T-H motif-like region. The tract at residues Leu93–Leu221 is riboflavin kinase. Gly102–Ala107 is a binding site for CDP. Residues Thr131 and Asn133 each contribute to the Mg(2+) site. Thr188 and Glu196 together coordinate FMN. Residue Glu201–Arg204 coordinates CDP.

Belongs to the archaeal riboflavin kinase family. Mg(2+) is required as a cofactor.

The enzyme catalyses riboflavin + CTP = CDP + FMN + H(+). Its pathway is cofactor biosynthesis; FMN biosynthesis; FMN from riboflavin (CTP route): step 1/1. In terms of biological role, catalyzes the CTP-dependent phosphorylation of riboflavin (vitamin B2) to form flavin mononucleotide (FMN). The chain is Riboflavin kinase (ribK) from Methanospirillum hungatei JF-1 (strain ATCC 27890 / DSM 864 / NBRC 100397 / JF-1).